The sequence spans 617 residues: Chaperone protein DnaK (617 aa).

Thr-175 carries the post-translational modification Phosphothreonine; by autocatalysis. The segment covering 578–592 (AGAEAQQGAQGTQGA) has biased composition (low complexity). Positions 578–617 (AGAEAQQGAQGTQGADMGGNAQGKDDDNVVDADFKVEDDK) are disordered. Residues 600 to 617 (GKDDDNVVDADFKVEDDK) show a composition bias toward basic and acidic residues.

This sequence belongs to the heat shock protein 70 family.

In terms of biological role, acts as a chaperone. The polypeptide is Chaperone protein DnaK (Clostridium novyi (strain NT)).